We begin with the raw amino-acid sequence, 554 residues long: Glucose-6-phosphate isomerase (554 aa).

Residue Glu-359 is the Proton donor of the active site. Catalysis depends on residues His-390 and Lys-518.

The protein belongs to the GPI family.

The protein resides in the cytoplasm. It catalyses the reaction alpha-D-glucose 6-phosphate = beta-D-fructose 6-phosphate. The protein operates within carbohydrate biosynthesis; gluconeogenesis. It functions in the pathway carbohydrate degradation; glycolysis; D-glyceraldehyde 3-phosphate and glycerone phosphate from D-glucose: step 2/4. Functionally, catalyzes the reversible isomerization of glucose-6-phosphate to fructose-6-phosphate. This chain is Glucose-6-phosphate isomerase, found in Stutzerimonas stutzeri (strain A1501) (Pseudomonas stutzeri).